A 334-amino-acid polypeptide reads, in one-letter code: uncharacterized protein (334 aa).

2 helical membrane passes run 19 to 39 and 55 to 75; these read AFLRVIGLCGLFSVIAISFGI and LIVLGSVVLFLAFVIHFAALF. Residues 308–334 are disordered; sequence KPESKSSSQKSVETEIEKEVKDKLAKN. Residues 319–334 are compositionally biased toward basic and acidic residues; sequence VETEIEKEVKDKLAKN.

Its subcellular location is the cell membrane. This is an uncharacterized protein from Mycoplasma genitalium (strain ATCC 33530 / DSM 19775 / NCTC 10195 / G37) (Mycoplasmoides genitalium).